A 424-amino-acid chain; its full sequence is Riboflavin biosynthesis protein RibBA (424 aa).

The interval 1–206 (MVTCEAGIAS…VDDLITYRWT (206 aa)) is DHBP synthase. Residues 32–33 (RE), D37, 145–149 (RPGHT), and E169 contribute to the D-ribulose 5-phosphate site. E33 is a Mg(2+) binding site. A Mg(2+)-binding site is contributed by H148. Residues 207-424 (FDSLVEHVSS…YETVERTSCC (218 aa)) are GTP cyclohydrolase II. Residue 257 to 261 (RVHSE) participates in GTP binding. Residues C262, C273, and C275 each contribute to the Zn(2+) site. GTP-binding positions include Q278, 301 to 303 (EGR), and T323. D335 serves as the catalytic Proton acceptor; for GTP cyclohydrolase activity. Catalysis depends on R337, which acts as the Nucleophile; for GTP cyclohydrolase activity. The GTP site is built by T358 and K363.

The protein in the N-terminal section; belongs to the DHBP synthase family. In the C-terminal section; belongs to the GTP cyclohydrolase II family. It depends on Mg(2+) as a cofactor. Mn(2+) serves as cofactor. Requires Zn(2+) as cofactor.

The catalysed reaction is D-ribulose 5-phosphate = (2S)-2-hydroxy-3-oxobutyl phosphate + formate + H(+). It catalyses the reaction GTP + 4 H2O = 2,5-diamino-6-hydroxy-4-(5-phosphoribosylamino)-pyrimidine + formate + 2 phosphate + 3 H(+). The protein operates within cofactor biosynthesis; riboflavin biosynthesis; 2-hydroxy-3-oxobutyl phosphate from D-ribulose 5-phosphate: step 1/1. It functions in the pathway cofactor biosynthesis; riboflavin biosynthesis; 5-amino-6-(D-ribitylamino)uracil from GTP: step 1/4. Its function is as follows. Catalyzes the conversion of D-ribulose 5-phosphate to formate and 3,4-dihydroxy-2-butanone 4-phosphate. Functionally, catalyzes the conversion of GTP to 2,5-diamino-6-ribosylamino-4(3H)-pyrimidinone 5'-phosphate (DARP), formate and pyrophosphate. In Chlamydia muridarum (strain MoPn / Nigg), this protein is Riboflavin biosynthesis protein RibBA.